Consider the following 365-residue polypeptide: 1-aminocyclopropane-1-carboxylate oxidase homolog 1 (365 aa).

The Fe2OG dioxygenase domain occupies 212 to 313 (CTNSLLLLGH…RISVACFFSS (102 aa)). Fe cation-binding residues include His-238, Asp-240, and His-294.

Belongs to the iron/ascorbate-dependent oxidoreductase family. Fe cation is required as a cofactor.

This is 1-aminocyclopropane-1-carboxylate oxidase homolog 1 from Arabidopsis thaliana (Mouse-ear cress).